The chain runs to 167 residues: Thioredoxin-like protein HI_1115 (167 aa).

The helical transmembrane segment at 10-27 (GLSLFLTFIVITSILDFV) threads the bilayer. The region spanning 30-167 (PVVPEEINKI…VRLFFAEFFG (138 aa)) is the Thioredoxin domain. An intrachain disulfide couples cysteine 69 to cysteine 72.

It belongs to the thioredoxin family.

It localises to the cell membrane. This is Thioredoxin-like protein HI_1115 from Haemophilus influenzae (strain ATCC 51907 / DSM 11121 / KW20 / Rd).